The primary structure comprises 1114 residues: Hephaestin-like protein (1114 aa).

Residues 1-26 (MMDRSNAAFVLTACFIFSQLICHVAA) form the signal peptide. Plastocyanin-like domains follow at residues 27–210 (ITRT…LICR), 218–365 (QQSG…VTKC), 380–562 (KRTY…LLTC), 572–719 (TRKD…VNTC), 730–915 (KTRD…LIIC), and 924–1114 (TEER…LLKA). The Extracellular segment spans residues 27-1091 (ITRTYYIAAV…KTTPKPITAA (1065 aa)). A glycan (N-linked (GlcNAc...) asparagine) is linked at asparagine 121. Residues histidine 129, histidine 131, histidine 189, and histidine 191 each coordinate Cu cation. Cysteine 183 and cysteine 209 are oxidised to a cystine. N-linked (GlcNAc...) asparagine glycosylation occurs at asparagine 236. Cysteine 284 and cysteine 365 form a disulfide bridge. The Cu cation site is built by histidine 303, cysteine 346, and histidine 351. Asparagine 361, asparagine 478, and asparagine 489 each carry an N-linked (GlcNAc...) asparagine glycan. Cystine bridges form between cysteine 536–cysteine 562 and cysteine 638–cysteine 719. Cu cation is bound by residues histidine 657, cysteine 700, histidine 705, and methionine 710. Asparagine 831 carries N-linked (GlcNAc...) asparagine glycosylation. Cysteine 889 and cysteine 915 are oxidised to a cystine. N-linked (GlcNAc...) asparagine glycosylation is present at asparagine 944. Residues histidine 1014, histidine 1017, histidine 1019, histidine 1059, cysteine 1060, histidine 1061, histidine 1065, and methionine 1070 each coordinate Cu cation. The chain crosses the membrane as a helical span at residues 1092–1112 (SSFVTSSIFIYLSFPVLAMLL). At 1113–1114 (KA) the chain is on the cytoplasmic side.

This sequence belongs to the multicopper oxidase family. Requires Cu cation as cofactor. Component of the acid-insoluble and acid-soluble organic matrix of the aragonitic skeleton (at protein level).

Its subcellular location is the membrane. Functionally, may function as a ferroxidase and may be involved in copper transport and homeostasis. This chain is Hephaestin-like protein, found in Acropora millepora (Staghorn coral).